A 41-amino-acid chain; its full sequence is MARAKQTARKSTGAEAPRKQLASKAARKSAPATGGIKKPHR.

The tract at residues 1-41 (MARAKQTARKSTGAEAPRKQLASKAARKSAPATGGIKKPHR) is disordered.

It belongs to the histone H3 family. In terms of assembly, the nucleosome is a histone octamer containing two molecules each of H2A, H2B, H3 and H4 assembled in one H3-H4 heterotetramer and two H2A-H2B heterodimers. The octamer wraps approximately 147 bp of DNA.

It is found in the nucleus. Its subcellular location is the chromosome. Its function is as follows. Core component of nucleosome. Nucleosomes wrap and compact DNA into chromatin, limiting DNA accessibility to the cellular machineries which require DNA as a template. Histones thereby play a central role in transcription regulation, DNA repair, DNA replication and chromosomal stability. DNA accessibility is regulated via a complex set of post-translational modifications of histones, also called histone code, and nucleosome remodeling. The protein is Histone H3.2 of Tetrahymena borealis.